The chain runs to 348 residues: MFSNKQVIGVVFGGKSSEHEVSIKSAKTIYNALRYLSNKERYIARPIYIDKYGYWHDYIFSESILFDKKDHLIFEERRINLTNLSNMEDIDVWFPCLHGPNGEDGVIQGLFKSTGKPFVGSGVLGSALGMDKIAMKSVFKSYNLPQVPYISLNKPDIQNNLYMKSIYEQINKIISYPCFIKPANLGSSVGITKAYSKEEFIAGIEFAAKYDERIIVEKSIEGRELECGILGKSIMKSSVVGEVKFQTDWYTYESKYNANLSSTIIPADLNIEISNKIQKLAIEACKAINAYGLARVDFFYQESTQQIYINEVNTLPGFTKTSMYPTLWEASGLKLEKLVANLIEIAKE.

The region spanning 136–344 is the ATP-grasp domain; sequence KSVFKSYNLP…LEKLVANLIE (209 aa). ATP is bound at residue 171-226; sequence NKIISYPCFIKPANLGSSVGITKAYSKEEFIAGIEFAAKYDERIIVEKSIEGRELE. Positions 297, 311, and 313 each coordinate Mg(2+).

This sequence belongs to the D-alanine--D-alanine ligase family. Mg(2+) serves as cofactor. Mn(2+) is required as a cofactor.

It is found in the cytoplasm. It carries out the reaction 2 D-alanine + ATP = D-alanyl-D-alanine + ADP + phosphate + H(+). Its pathway is cell wall biogenesis; peptidoglycan biosynthesis. Cell wall formation. The polypeptide is D-alanine--D-alanine ligase (Prochlorococcus marinus (strain NATL2A)).